Here is a 117-residue protein sequence, read N- to C-terminus: Hydrogenase maturation factor HypA (117 aa).

His-2 contributes to the Ni(2+) binding site. Residues Cys-73, Cys-76, Cys-89, and Cys-92 each coordinate Zn(2+).

It belongs to the HypA/HybF family.

Involved in the maturation of [NiFe] hydrogenases. Required for nickel insertion into the metal center of the hydrogenase. The chain is Hydrogenase maturation factor HypA from Shewanella baltica (strain OS185).